A 408-amino-acid polypeptide reads, in one-letter code: Acetylornithine/succinyldiaminopimelate aminotransferase (408 aa).

Pyridoxal 5'-phosphate-binding positions include 108 to 109 (GA) and Phe-141. Arg-144 contributes to the N(2)-acetyl-L-ornithine binding site. Residue 226–229 (DEIQ) participates in pyridoxal 5'-phosphate binding. Residue Lys-255 is modified to N6-(pyridoxal phosphate)lysine. A N(2)-acetyl-L-ornithine-binding site is contributed by Thr-283. Thr-284 lines the pyridoxal 5'-phosphate pocket.

This sequence belongs to the class-III pyridoxal-phosphate-dependent aminotransferase family. ArgD subfamily. As to quaternary structure, homodimer. Requires pyridoxal 5'-phosphate as cofactor.

It localises to the cytoplasm. The catalysed reaction is N(2)-acetyl-L-ornithine + 2-oxoglutarate = N-acetyl-L-glutamate 5-semialdehyde + L-glutamate. It carries out the reaction N-succinyl-(2S,6S)-2,6-diaminopimelate + 2-oxoglutarate = (S)-2-succinylamino-6-oxoheptanedioate + L-glutamate. It functions in the pathway amino-acid biosynthesis; L-arginine biosynthesis; N(2)-acetyl-L-ornithine from L-glutamate: step 4/4. Its pathway is amino-acid biosynthesis; L-lysine biosynthesis via DAP pathway; LL-2,6-diaminopimelate from (S)-tetrahydrodipicolinate (succinylase route): step 2/3. Involved in both the arginine and lysine biosynthetic pathways. This chain is Acetylornithine/succinyldiaminopimelate aminotransferase, found in Buchnera aphidicola subsp. Acyrthosiphon pisum (strain APS) (Acyrthosiphon pisum symbiotic bacterium).